We begin with the raw amino-acid sequence, 930 residues long: Protein translocase subunit SecA (930 aa).

Residues Gln-87, Gly-105–Thr-109, and Asp-516 each bind ATP. Cys-914, Cys-916, Cys-925, and His-926 together coordinate Zn(2+).

This sequence belongs to the SecA family. In terms of assembly, monomer and homodimer. Part of the essential Sec protein translocation apparatus which comprises SecA, SecYEG and auxiliary proteins SecDF-YajC and YidC. It depends on Zn(2+) as a cofactor.

It is found in the cell inner membrane. Its subcellular location is the cytoplasm. The enzyme catalyses ATP + H2O + cellular proteinSide 1 = ADP + phosphate + cellular proteinSide 2.. Functionally, part of the Sec protein translocase complex. Interacts with the SecYEG preprotein conducting channel. Has a central role in coupling the hydrolysis of ATP to the transfer of proteins into and across the cell membrane, serving both as a receptor for the preprotein-SecB complex and as an ATP-driven molecular motor driving the stepwise translocation of polypeptide chains across the membrane. The sequence is that of Protein translocase subunit SecA from Variovorax paradoxus (strain S110).